Consider the following 103-residue polypeptide: NAD(P)H-quinone oxidoreductase subunit 4L, organellar chromatophore (103 aa).

3 helical membrane-spanning segments follow: residues 3-23, 32-52, and 63-83; these read IMLEAYLTLAAVLFCIGVWGL, VLMSIELMLNAVNINLMAFSN, and VFAIFVITVAAAEAAVGLAIL.

It belongs to the complex I subunit 4L family. NDH is composed of at least 16 different subunits, 5 of which are encoded in the nucleus.

Its subcellular location is the plastid. It localises to the organellar chromatophore thylakoid membrane. It carries out the reaction a plastoquinone + NADH + (n+1) H(+)(in) = a plastoquinol + NAD(+) + n H(+)(out). It catalyses the reaction a plastoquinone + NADPH + (n+1) H(+)(in) = a plastoquinol + NADP(+) + n H(+)(out). In terms of biological role, NDH shuttles electrons from NAD(P)H:plastoquinone, via FMN and iron-sulfur (Fe-S) centers, to quinones in the photosynthetic chain and possibly in a chloroplast respiratory chain. The immediate electron acceptor for the enzyme in this species is believed to be plastoquinone. Couples the redox reaction to proton translocation, and thus conserves the redox energy in a proton gradient. The sequence is that of NAD(P)H-quinone oxidoreductase subunit 4L, organellar chromatophore from Paulinella chromatophora.